The sequence spans 248 residues: Cytochrome c oxidase subunit 2 (248 aa).

Over 1–43 (MTNLLNNWLIINQFGYDLPEPWQLGLQDAAHPVMEEIIFFHDQ) the chain is Mitochondrial intermembrane. The helical transmembrane segment at 44-65 (VMFILIIIITTVLWLIVKALSG) threads the bilayer. The Mitochondrial matrix segment spans residues 66-79 (KAYHRYLVDGTLLE). A helical membrane pass occupies residues 80 to 99 (IIWTIVPAIILILIAFPSLK). The Mitochondrial intermembrane portion of the chain corresponds to 100-248 (LLYLMDEVMD…INWVLSGSDE (149 aa)). Cu cation-binding residues include H180, C215, E217, C219, H223, and M226. E217 serves as a coordination point for Mg(2+).

It belongs to the cytochrome c oxidase subunit 2 family. Component of the cytochrome c oxidase (complex IV, CIV), a multisubunit enzyme composed of a catalytic core of 3 subunits and several supernumerary subunits. The complex exists as a monomer or a dimer and forms supercomplexes (SCs) in the inner mitochondrial membrane with ubiquinol-cytochrome c oxidoreductase (cytochrome b-c1 complex, complex III, CIII). It depends on Cu cation as a cofactor.

It localises to the mitochondrion inner membrane. It catalyses the reaction 4 Fe(II)-[cytochrome c] + O2 + 8 H(+)(in) = 4 Fe(III)-[cytochrome c] + 2 H2O + 4 H(+)(out). Component of the cytochrome c oxidase, the last enzyme in the mitochondrial electron transport chain which drives oxidative phosphorylation. The respiratory chain contains 3 multisubunit complexes succinate dehydrogenase (complex II, CII), ubiquinol-cytochrome c oxidoreductase (cytochrome b-c1 complex, complex III, CIII) and cytochrome c oxidase (complex IV, CIV), that cooperate to transfer electrons derived from NADH and succinate to molecular oxygen, creating an electrochemical gradient over the inner membrane that drives transmembrane transport and the ATP synthase. Cytochrome c oxidase is the component of the respiratory chain that catalyzes the reduction of oxygen to water. Electrons originating from reduced cytochrome c in the intermembrane space (IMS) are transferred via the dinuclear copper A center (CU(A)) of subunit 2 and heme A of subunit 1 to the active site in subunit 1, a binuclear center (BNC) formed by heme A3 and copper B (CU(B)). The BNC reduces molecular oxygen to 2 water molecules using 4 electrons from cytochrome c in the IMS and 4 protons from the mitochondrial matrix. The sequence is that of Cytochrome c oxidase subunit 2 (COII) from Metridium senile (Brown sea anemone).